The following is a 759-amino-acid chain: DNA topoisomerase 3 (759 aa).

The Toprim domain occupies 3-147 (RALFVAEKND…RLDIFRARFS (145 aa)). The 426-residue stretch at 165 to 590 (DEKTVAAVDC…EQIGKYRAIF (426 aa)) folds into the Topo IA-type catalytic domain. The active-site O-(5'-phospho-DNA)-tyrosine intermediate is the tyrosine 334. Positions 609 to 715 (DKNNQAGGGP…KEQEEEEEVF (107 aa)) are disordered. Residues 614–639 (AGGGPGGPGGGGGPPRGPGGGGGGGP) show a composition bias toward gly residues. The segment covering 640–649 (TGPPAPPKPP) has biased composition (pro residues). Residues cysteine 716, cysteine 718, cysteine 743, and cysteine 753 each coordinate Zn(2+). The GRF-type zinc finger occupies 716 to 759 (CQCPEPMRAVTKVVQKEGPNKGKKFYTCSLPYTSSEKCNFFKWA).

It belongs to the type IA topoisomerase family. Component of the BTR double Holliday Junction dissolution complex composed of at least him-6, top-3, rmh-1 and rmif-2, which is involved in double strand break repair in the germline. May interact with rmh-1.

It localises to the nucleus. It carries out the reaction ATP-independent breakage of single-stranded DNA, followed by passage and rejoining.. Functionally, component of the BTR double Holliday Junction dissolution complex, which is involved in homologous recombination during meiotic double strand break in the germline. Releases the supercoiling and torsional tension of DNA introduced during the DNA replication and transcription by transiently cleaving and rejoining one strand of the DNA duplex. Introduces a single-strand break via transesterification at a target site in duplex DNA. The scissile phosphodiester is attacked by the catalytic tyrosine of the enzyme, resulting in the formation of a DNA-(5'-phosphotyrosyl)-enzyme intermediate and the expulsion of a 3'-OH DNA strand. The free DNA strand than undergoes passage around the unbroken strand thus removing DNA supercoils. Finally, in the religation step, the DNA 3'-OH attacks the covalent intermediate to expel the active-site tyrosine and restore the DNA phosphodiester backbone. This chain is DNA topoisomerase 3, found in Caenorhabditis elegans.